Reading from the N-terminus, the 295-residue chain is Glutamyl-Q tRNA(Asp) synthetase (295 aa).

Residues 9 to 13 and Glu-45 contribute to the L-glutamate site; that span reads RFAPT. The 'HIGH' region signature appears at 12 to 22; that stretch reads PTPSGYLHFGS. Cys-101, Cys-103, Tyr-115, and Cys-119 together coordinate Zn(2+). The L-glutamate site is built by Tyr-172 and Arg-190. The short motif at 228-232 is the 'KMSKS' region element; sequence KLGKS. Lys-231 serves as a coordination point for ATP.

It belongs to the class-I aminoacyl-tRNA synthetase family. GluQ subfamily. The cofactor is Zn(2+).

Functionally, catalyzes the tRNA-independent activation of glutamate in presence of ATP and the subsequent transfer of glutamate onto a tRNA(Asp). Glutamate is transferred on the 2-amino-5-(4,5-dihydroxy-2-cyclopenten-1-yl) moiety of the queuosine in the wobble position of the QUC anticodon. This Pseudomonas syringae pv. syringae (strain B728a) protein is Glutamyl-Q tRNA(Asp) synthetase.